Reading from the N-terminus, the 525-residue chain is AarF domain-containing protein kinase 1 (525 aa).

The region spanning 148-477 is the Protein kinase domain; it reads SFDDTPLGAA…HKKRDAGSFF (330 aa). ATP contacts are provided by residues 154–162 and lysine 176; that span reads LGAASLAQV. The active-site Proton acceptor is aspartate 308.

This sequence belongs to the protein kinase superfamily. ADCK protein kinase family.

The protein resides in the mitochondrion. Its function is as follows. Appears to be essential for maintaining mitochondrial cristae formation and mitochondrial function by acting via YME1L1 in a kinase-independent manner to regulate essential mitochondrial structural proteins OPA1 and IMMT. The action of this enzyme is not yet clear. It is not known if it has protein kinase activity and what type of substrate it would phosphorylate (Ser, Thr or Tyr). This is AarF domain-containing protein kinase 1 (Adck1) from Mus musculus (Mouse).